The following is a 527-amino-acid chain: DNA polymerase epsilon subunit 2 (527 aa).

It belongs to the DNA polymerase epsilon subunit B family. In terms of assembly, component of the DNA polymerase epsilon complex consisting of four subunits: the catalytic subunit POLE and the accessory subunits POLE2, POLE3 and POLE4.

It localises to the nucleus. In terms of biological role, accessory component of the DNA polymerase epsilon complex. Participates in DNA repair and in chromosomal DNA replication. The protein is DNA polymerase epsilon subunit 2 of Homo sapiens (Human).